A 466-amino-acid chain; its full sequence is Cysteine--tRNA ligase (466 aa).

Residue Cys-29 coordinates Zn(2+). Positions Pro-31–Asn-41 match the 'HIGH' region motif. 3 residues coordinate Zn(2+): Cys-209, His-234, and Glu-238. A 'KMSKS' region motif is present at residues Lys-266–Ser-270. Residue Lys-269 participates in ATP binding. Residue Ser-270 is modified to Phosphoserine.

This sequence belongs to the class-I aminoacyl-tRNA synthetase family. Monomer. The cofactor is Zn(2+).

The protein localises to the cytoplasm. It catalyses the reaction tRNA(Cys) + L-cysteine + ATP = L-cysteinyl-tRNA(Cys) + AMP + diphosphate. This chain is Cysteine--tRNA ligase, found in Bacillus velezensis (strain DSM 23117 / BGSC 10A6 / LMG 26770 / FZB42) (Bacillus amyloliquefaciens subsp. plantarum).